The chain runs to 183 residues: Cell division protein ZapC (183 aa).

Belongs to the ZapC family. Interacts directly with FtsZ.

Its subcellular location is the cytoplasm. Its function is as follows. Contributes to the efficiency of the cell division process by stabilizing the polymeric form of the cell division protein FtsZ. Acts by promoting interactions between FtsZ protofilaments and suppressing the GTPase activity of FtsZ. The chain is Cell division protein ZapC from Xenorhabdus bovienii (strain SS-2004) (Xenorhabdus nematophila subsp. bovienii).